The sequence spans 337 residues: Fructose-1,6-bisphosphatase class 1 (337 aa).

4 residues coordinate Mg(2+): E94, D116, L118, and D119. Substrate-binding positions include 119–122 (DGSS), N210, and K276. E282 provides a ligand contact to Mg(2+).

Belongs to the FBPase class 1 family. In terms of assembly, homotetramer. The cofactor is Mg(2+).

The protein localises to the cytoplasm. The catalysed reaction is beta-D-fructose 1,6-bisphosphate + H2O = beta-D-fructose 6-phosphate + phosphate. It participates in carbohydrate biosynthesis; gluconeogenesis. This is Fructose-1,6-bisphosphatase class 1 from Burkholderia cenocepacia (strain HI2424).